The sequence spans 353 residues: Farnesyl pyrophosphate synthase (353 aa).

3 residues coordinate isopentenyl diphosphate: K57, R60, and Q96. N6-(2-hydroxyisobutyryl)lysine; alternate is present on K57. K57 carries the post-translational modification N6-acetyllysine; alternate. Mg(2+) contacts are provided by D103 and D107. R112 is a binding site for dimethylallyl diphosphate. R113 provides a ligand contact to isopentenyl diphosphate. 5 residues coordinate dimethylallyl diphosphate: K200, T201, Q240, K257, and K266.

This sequence belongs to the FPP/GGPP synthase family. As to quaternary structure, homodimer. Interacts with RSAD2. The cofactor is Mg(2+). As to expression, testis, liver, kidney, brain and adrenal gland.

The protein resides in the cytoplasm. The catalysed reaction is isopentenyl diphosphate + dimethylallyl diphosphate = (2E)-geranyl diphosphate + diphosphate. It carries out the reaction isopentenyl diphosphate + (2E)-geranyl diphosphate = (2E,6E)-farnesyl diphosphate + diphosphate. It participates in isoprenoid biosynthesis; farnesyl diphosphate biosynthesis; farnesyl diphosphate from geranyl diphosphate and isopentenyl diphosphate: step 1/1. It functions in the pathway isoprenoid biosynthesis; geranyl diphosphate biosynthesis; geranyl diphosphate from dimethylallyl diphosphate and isopentenyl diphosphate: step 1/1. Inactivated by interferon-induced RSAD2. This inactivation may result of disruption of lipid rafts at the plasma membrane, and thus have an antiviral effect since many enveloped viruses need lipid rafts to bud efficiently out of the cell. In terms of biological role, key enzyme in isoprenoid biosynthesis which catalyzes the formation of farnesyl diphosphate (FPP), a precursor for several classes of essential metabolites including sterols, dolichols, carotenoids, and ubiquinones. FPP also serves as substrate for protein farnesylation and geranylgeranylation. Catalyzes the sequential condensation of isopentenyl pyrophosphate with the allylic pyrophosphates, dimethylallyl pyrophosphate, and then with the resultant geranylpyrophosphate to the ultimate product farnesyl pyrophosphate. In Rattus norvegicus (Rat), this protein is Farnesyl pyrophosphate synthase (Fdps).